Reading from the N-terminus, the 127-residue chain is Large ribosomal subunit protein bL17 (127 aa).

It belongs to the bacterial ribosomal protein bL17 family. As to quaternary structure, part of the 50S ribosomal subunit. Contacts protein L32.

In Legionella pneumophila (strain Lens), this protein is Large ribosomal subunit protein bL17.